The chain runs to 476 residues: Carbamoyl phosphate synthase arginine-specific small chain (476 aa).

The N-terminal 24 residues, 1-24, are a transit peptide targeting the mitochondrion; that stretch reads MFSHLLKPAARSAGLLGHVNRRYL. The region spanning 228-415 is the Glutamine amidotransferase type-1 domain; sequence HVALIDCGVK…IQNVQRYKDH (188 aa). Cysteine 304 serves as the catalytic Nucleophile. Residues histidine 388 and glutamate 390 contribute to the active site.

This sequence belongs to the CarA family. Heterodimer composed of 2 chains; the small (or glutamine) chain promotes the hydrolysis of glutamine to ammonia, which is used by the large (or ammonia) chain to synthesize carbamoyl phosphate.

The protein localises to the mitochondrion matrix. It carries out the reaction hydrogencarbonate + L-glutamine + 2 ATP + H2O = carbamoyl phosphate + L-glutamate + 2 ADP + phosphate + 2 H(+). It catalyses the reaction L-glutamine + H2O = L-glutamate + NH4(+). The protein operates within amino-acid biosynthesis; L-arginine biosynthesis; carbamoyl phosphate from bicarbonate: step 1/1. Functionally, small subunit of the arginine-specific carbamoyl phosphate synthase (CPSase). CPSase catalyzes the formation of carbamoyl phosphate from the ammonia moiety of glutamine, carbonate, and phosphate donated by ATP, the first step of the arginine biosynthetic pathway. The small subunit (glutamine amidotransferase) binds and cleaves glutamine to supply the large subunit with the substrate ammonia. This chain is Carbamoyl phosphate synthase arginine-specific small chain (CPA1), found in Phaeosphaeria nodorum (strain SN15 / ATCC MYA-4574 / FGSC 10173) (Glume blotch fungus).